A 357-amino-acid polypeptide reads, in one-letter code: Peptide chain release factor 1 (357 aa).

Position 234 is an N5-methylglutamine (Gln-234). Positions 283–313 (SKKQEQRSSNRKQQVGSGDRSERIRTYNFPQ) are disordered.

It belongs to the prokaryotic/mitochondrial release factor family. Methylated by PrmC. Methylation increases the termination efficiency of RF1.

The protein resides in the cytoplasm. Peptide chain release factor 1 directs the termination of translation in response to the peptide chain termination codons UAG and UAA. In Borrelia garinii subsp. bavariensis (strain ATCC BAA-2496 / DSM 23469 / PBi) (Borreliella bavariensis), this protein is Peptide chain release factor 1.